The following is a 320-amino-acid chain: Putative HTH-type transcriptional regulatory protein VNG_2112C (320 aa).

The region spanning Leu132–Met189 is the HTH cro/C1-type domain. A DNA-binding region (H-T-H motif) is located at residues Leu143 to Asp162.

This chain is Putative HTH-type transcriptional regulatory protein VNG_2112C, found in Halobacterium salinarum (strain ATCC 700922 / JCM 11081 / NRC-1) (Halobacterium halobium).